A 314-amino-acid chain; its full sequence is HTH-type transcriptional regulator LeuO (314 aa).

One can recognise an HTH lysR-type domain in the interval 22–79 (VDLNLLTVFDAVMQEQNITRAAHVLGMSQPAVSNAVARLKVMFNDELFVRYGRGIQPT). Residues 39-58 (ITRAAHVLGMSQPAVSNAVA) constitute a DNA-binding region (H-T-H motif).

This sequence belongs to the LysR transcriptional regulatory family.

Its function is as follows. A global transcription factor. Activates transcription of the 9 following operons; yjjQ-bglJ, yjjP, acrEF, ybdO, yjcRQP, casABCDE12, rhsD-ybbC, fepE and gltF, in most cases it probably interferes with silencing by H-NS and activates transcription. Represses transcription of the 3 following operons; uxaCA, sdaCB and btsT. H-NS repression of the bgl operon, leading to the ability to metabolize some beta-glucosides. It also directly activates the bgl operon. Activation is H-NS and BglJ-RcsB independent. In Escherichia coli (strain K12), this protein is HTH-type transcriptional regulator LeuO (leuO).